Reading from the N-terminus, the 316-residue chain is tRNA dimethylallyltransferase (316 aa).

17-24 (GPTASGKT) contributes to the ATP binding site. 19–24 (TASGKT) contributes to the substrate binding site. 4 interaction with substrate tRNA regions span residues 42 to 45 (DSAL), 166 to 170 (QRLSR), 247 to 252 (RCVGYR), and 280 to 287 (KRQITWLR).

It belongs to the IPP transferase family. In terms of assembly, monomer. Requires Mg(2+) as cofactor.

It carries out the reaction adenosine(37) in tRNA + dimethylallyl diphosphate = N(6)-dimethylallyladenosine(37) in tRNA + diphosphate. Functionally, catalyzes the transfer of a dimethylallyl group onto the adenine at position 37 in tRNAs that read codons beginning with uridine, leading to the formation of N6-(dimethylallyl)adenosine (i(6)A). In Escherichia coli O81 (strain ED1a), this protein is tRNA dimethylallyltransferase.